Reading from the N-terminus, the 126-residue chain is UPF0235 protein C15orf40 homolog (126 aa).

The disordered stretch occupies residues 1–32 (MPKKAGATSKGKNQTKEPETAPPAAGPVATDP). At S89 the chain carries Phosphoserine.

The protein belongs to the UPF0235 family.

The polypeptide is UPF0235 protein C15orf40 homolog (Mus musculus (Mouse)).